Consider the following 243-residue polypeptide: tRNA pseudouridine synthase A (243 aa).

Residue Asp-54 is the Nucleophile of the active site. Tyr-112 is a binding site for substrate.

Belongs to the tRNA pseudouridine synthase TruA family. Homodimer.

The catalysed reaction is uridine(38/39/40) in tRNA = pseudouridine(38/39/40) in tRNA. Functionally, formation of pseudouridine at positions 38, 39 and 40 in the anticodon stem and loop of transfer RNAs. This is tRNA pseudouridine synthase A from Aster yellows witches'-broom phytoplasma (strain AYWB).